A 205-amino-acid polypeptide reads, in one-letter code: Probable thymidylate kinase (205 aa).

Residue 7 to 14 coordinates ATP; sequence GIDGAGKS.

Belongs to the thymidylate kinase family.

It carries out the reaction dTMP + ATP = dTDP + ADP. The sequence is that of Probable thymidylate kinase from Thermococcus kodakarensis (strain ATCC BAA-918 / JCM 12380 / KOD1) (Pyrococcus kodakaraensis (strain KOD1)).